A 445-amino-acid chain; its full sequence is MALPGNFLCCLLVAWLCDPGLGVPLAPAYGAPAVGQFWHVTDLHLDPTYHITDDHTKVCASSKGANVSNPGPFGDVLCDSPYQLILSAFDFIKNSGQEASFMIWTGDSPPHVPVRELSTGSVIEVITNMTVTVQNLFPNLQVFPALGNHDYWPQDQLPIATSKVYSAVSDLWKPWLDEEAISTLRKGGFYSQKVASNPDLRIISLNTNLYYGPNIMTLNKTDPANQFEWLENTLNSSLRNKEKVYVIAHVPVGYLPYATKTPAMRQYYNEKLVDIFRRYSSVIAGQFYGHTHRDSLMVLSDKNGNPINSVFVAPAVTPVKGVLEKETNNPGVRLFQYKPGDYTLLDMLQYYLNLTEANLKGESNWTLEYTLTQAYGVADLQPKSLHGLAQQLATIDSKQFLKYYHYFFVSYDSSAPCDQRCKTLQICAIMNLDLVSYEDCLKRHL.

A signal peptide spans 1 to 22 (MALPGNFLCCLLVAWLCDPGLG). Zn(2+) is bound by residues Asp-42 and His-44. Cys-59 and Cys-78 form a disulfide bridge. N-linked (GlcNAc...) asparagine glycosylation occurs at Asn-66. Asp-107 contacts Zn(2+). His-111 is a binding site for ATP. Asn-128 carries N-linked (GlcNAc...) asparagine glycosylation. Asn-148 contributes to the Zn(2+) binding site. ATP-binding residues include Asn-148 and His-149. N-linked (GlcNAc...) asparagine glycosylation is found at Asn-219 and Asn-235. His-249, His-290, and His-292 together coordinate Zn(2+). Residues Asn-353 and Asn-364 are each glycosylated (N-linked (GlcNAc...) asparagine). Cystine bridges form between Cys-417-Cys-421 and Cys-427-Cys-440.

Belongs to the acid sphingomyelinase family. In terms of assembly, monomer. Homodimer; homodimerizes following 2',3'-cGAMP-binding. Zn(2+) serves as cofactor.

Its subcellular location is the secreted. It carries out the reaction 2',3'-cGAMP + H2O = 5'-pGpA(2'-5') + H(+). The catalysed reaction is 5'-pGpA(2'-5') + H2O = 5'-GpA(2'-5') + phosphate. It catalyses the reaction a ribonucleoside 5'-triphosphate + H2O = a ribonucleoside 5'-diphosphate + phosphate + H(+). The enzyme catalyses ATP + H2O = ADP + phosphate + H(+). Cyclic-nucleotide phosphodiesterase that acts as a negative regulator of innate immunity by mediating degradation of 2',3'-cGAMP, thereby inhibiting the cGAS-STING signaling. Specifically linearizes 2',3'-cGAMP into 2'5'-bond pGpA and further hydrolyzes pGpA to produce GpA. Also has in vitro nucleotide phosphodiesterase activity with nucleoside triphosphates, such as ATP. Has in vitro activity with p-nitrophenyl-TMP. Has lower activity with nucleoside diphosphates, and no activity with nucleoside monophosphates. Has in vitro activity with CDP-choline, giving rise to CMP and phosphocholine. Has in vitro activity with CDP-ethanolamine. Does not have sphingomyelin phosphodiesterase activity. The polypeptide is Cyclic GMP-AMP phosphodiesterase SMPDL3A (Smpdl3a) (Rattus norvegicus (Rat)).